The chain runs to 196 residues: Imidazole glycerol phosphate synthase subunit HisH (196 aa).

The Glutamine amidotransferase type-1 domain occupies 2–196; it reads NVVILDTGCA…AKLLKNFLEM (195 aa). The active-site Nucleophile is the cysteine 77. Catalysis depends on residues histidine 178 and glutamate 180.

As to quaternary structure, heterodimer of HisH and HisF.

It localises to the cytoplasm. It carries out the reaction 5-[(5-phospho-1-deoxy-D-ribulos-1-ylimino)methylamino]-1-(5-phospho-beta-D-ribosyl)imidazole-4-carboxamide + L-glutamine = D-erythro-1-(imidazol-4-yl)glycerol 3-phosphate + 5-amino-1-(5-phospho-beta-D-ribosyl)imidazole-4-carboxamide + L-glutamate + H(+). It catalyses the reaction L-glutamine + H2O = L-glutamate + NH4(+). It participates in amino-acid biosynthesis; L-histidine biosynthesis; L-histidine from 5-phospho-alpha-D-ribose 1-diphosphate: step 5/9. In terms of biological role, IGPS catalyzes the conversion of PRFAR and glutamine to IGP, AICAR and glutamate. The HisH subunit catalyzes the hydrolysis of glutamine to glutamate and ammonia as part of the synthesis of IGP and AICAR. The resulting ammonia molecule is channeled to the active site of HisF. The chain is Imidazole glycerol phosphate synthase subunit HisH from Shigella flexneri.